Consider the following 74-residue polypeptide: Protein krueppel (74 aa).

4 C2H2-type zinc fingers span residues 1 to 4 (ERTH), 10 to 32 (FECPECHKRFTRDHHLKTHMRLH), 38 to 60 (YHCSHCDRQFVQVANLRRHLRVH), and 66 to 74 (YACELCDAR).

Belongs to the krueppel C2H2-type zinc-finger protein family.

It is found in the nucleus. In terms of biological role, krueppel is a gap class segmentation protein. The sequence is that of Protein krueppel (Kr) from Psychoda cinerea (Psychod fly).